We begin with the raw amino-acid sequence, 243 residues long: Ribonuclease PH (243 aa).

Residues Arg91 and 129–131 contribute to the phosphate site; that span reads GTR.

It belongs to the RNase PH family. Homohexameric ring arranged as a trimer of dimers.

It carries out the reaction tRNA(n+1) + phosphate = tRNA(n) + a ribonucleoside 5'-diphosphate. In terms of biological role, phosphorolytic 3'-5' exoribonuclease that plays an important role in tRNA 3'-end maturation. Removes nucleotide residues following the 3'-CCA terminus of tRNAs; can also add nucleotides to the ends of RNA molecules by using nucleoside diphosphates as substrates, but this may not be physiologically important. Probably plays a role in initiation of 16S rRNA degradation (leading to ribosome degradation) during starvation. The polypeptide is Ribonuclease PH (Burkholderia pseudomallei (strain 668)).